The sequence spans 334 residues: N-acetyl-gamma-glutamyl-phosphate reductase (334 aa).

Residue Cys-142 is part of the active site.

The protein belongs to the NAGSA dehydrogenase family. Type 1 subfamily.

The protein localises to the cytoplasm. It catalyses the reaction N-acetyl-L-glutamate 5-semialdehyde + phosphate + NADP(+) = N-acetyl-L-glutamyl 5-phosphate + NADPH + H(+). It functions in the pathway amino-acid biosynthesis; L-arginine biosynthesis; N(2)-acetyl-L-ornithine from L-glutamate: step 3/4. Functionally, catalyzes the NADPH-dependent reduction of N-acetyl-5-glutamyl phosphate to yield N-acetyl-L-glutamate 5-semialdehyde. This is N-acetyl-gamma-glutamyl-phosphate reductase from Pelodictyon phaeoclathratiforme (strain DSM 5477 / BU-1).